A 382-amino-acid chain; its full sequence is Galactokinase (382 aa).

34 to 37 (EHTD) is a substrate binding site. Position 124–130 (124–130 (GAGLSSS)) interacts with ATP. Mg(2+) is bound by residues Ser-130 and Glu-162. Asp-174 (proton acceptor) is an active-site residue. Tyr-223 is a binding site for substrate.

Belongs to the GHMP kinase family. GalK subfamily.

The protein localises to the cytoplasm. It carries out the reaction alpha-D-galactose + ATP = alpha-D-galactose 1-phosphate + ADP + H(+). The protein operates within carbohydrate metabolism; galactose metabolism. Its function is as follows. Catalyzes the transfer of the gamma-phosphate of ATP to D-galactose to form alpha-D-galactose-1-phosphate (Gal-1-P). In Enterobacter sp. (strain 638), this protein is Galactokinase.